The following is a 153-amino-acid chain: Arginine repressor (153 aa).

It belongs to the ArgR family.

It is found in the cytoplasm. The protein operates within amino-acid biosynthesis; L-arginine biosynthesis [regulation]. In terms of biological role, regulates arginine biosynthesis genes. This is Arginine repressor from Actinobacillus pleuropneumoniae serotype 7 (strain AP76).